The primary structure comprises 592 residues: Frizzled-9 (592 aa).

Residues 1 to 23 (MAVPPLLRGALLLWQLLATGGAA) form the signal peptide. Topologically, residues 24–230 (LEIGRFDPER…EVFWSRRDKD (207 aa)) are extracellular. The FZ domain occupies 35-156 (RGPAPCQAME…NDPHALCMEA (122 aa)). 5 disulfide bridges follow: cysteine 40-cysteine 101, cysteine 48-cysteine 94, cysteine 85-cysteine 123, cysteine 112-cysteine 153, and cysteine 116-cysteine 140. The interval 59-173 (PNLLGHTSQG…PTEPHKGLGM (115 aa)) is required for Wnt-activated receptor activity. A helical transmembrane segment spans residues 231 to 251 (FALVWMAVWSALCFFSTAFTV). The Cytoplasmic segment spans residues 252–267 (FTFLLEPHRFQYPERP). The helical transmembrane segment at 268–288 (IIFLSMCYNVYSLAFLIRAVA) threads the bilayer. The Extracellular segment spans residues 289 to 314 (GAQSVACDQEAGALYVIQEGLENTGC). Residues 315–335 (TLVFLLLYYFGMASSLWWVVL) form a helical membrane-spanning segment. The Cytoplasmic portion of the chain corresponds to 336-356 (TLTWFLAAGKKWGHEAIEAHG). The chain crosses the membrane as a helical span at residues 357-377 (SYFHMAAWGLPALKTIVVLTL). Residues 378-401 (RKVAGDELTGLCYVASMDPAALTG) are Extracellular-facing. A helical membrane pass occupies residues 402-422 (FVLVPLSCYLVLGTSFLLTGF). Topologically, residues 423–448 (VALFHIRKIMKTGGTNTEKLEKLMVK) are cytoplasmic. A helical membrane pass occupies residues 449 to 469 (IGVFSILYTVPATCVIVCYVY). Residues 470 to 509 (ERLNMDFWRLRATEQPCTAAAVPGGRRDCSLPGGSVPTVA) lie on the Extracellular side of the membrane. A helical transmembrane segment spans residues 510-530 (VFMLKIFMSLVVGITSGVWVW). Residues 531–592 (SSKTFQTWQS…DPSLENPTHL (62 aa)) are Cytoplasmic-facing. Positions 533–538 (KTFQTW) match the Lys-Thr-X-X-X-Trp motif, mediates interaction with the PDZ domain of Dvl family members motif. The tract at residues 555–592 (ACRTPGGYGRGTHCHYKAPTVVLHMTKTDPSLENPTHL) is required for CTNNB1 accumulation and TCF transcription factor activity.

This sequence belongs to the G-protein coupled receptor Fz/Smo family. In terms of processing, ubiquitinated by ZNRF3, leading to its degradation by the proteasome.

It localises to the cell membrane. Receptor for WNT2 that is coupled to the beta-catenin canonical signaling pathway, which leads to the activation of disheveled proteins, inhibition of GSK-3 kinase, nuclear accumulation of beta-catenin and activation of Wnt target genes. Plays a role in neuromuscular junction (NMJ) assembly by negatively regulating the clustering of acetylcholine receptors (AChR) through the beta-catenin canonical signaling pathway. May play a role in neural progenitor cells (NPCs) viability through the beta-catenin canonical signaling pathway by negatively regulating cell cycle arrest leading to inhibition of neuron apoptotic process. During hippocampal development, regulates neuroblast proliferation and apoptotic cell death. Controls bone formation through non canonical Wnt signaling mediated via ISG15. Positively regulates bone regeneration through non canonical Wnt signaling. The sequence is that of Frizzled-9 from Rattus norvegicus (Rat).